We begin with the raw amino-acid sequence, 471 residues long: Dynein regulatory complex subunit 4 (471 aa).

The tract at residues 1-24 (MAPKKKGTKKESKKDAVATGDIEG) is disordered. Coiled coils occupy residues 23–239 (EGAS…YNDI) and 282–425 (LSRA…DVAK).

This sequence belongs to the DRC4 family. As to quaternary structure, component of the nexin-dynein regulatory complex (N-DRC). Interacts with DRC1, DRC2 and DRC5.

It is found in the cytoplasm. It localises to the cytoskeleton. The protein localises to the flagellum axoneme. Its subcellular location is the flagellum basal body. In terms of biological role, component of the nexin-dynein regulatory complex (N-DRC), a key regulator of ciliary/flagellar motility which maintains the alignment and integrity of the distal axoneme and regulates microtubule sliding in motile axonemes. Plays an important role in the assembly of the N-DRC linker. The protein is Dynein regulatory complex subunit 4 of Chlamydomonas reinhardtii (Chlamydomonas smithii).